The following is a 221-amino-acid chain: Transcriptional regulatory protein QseB (221 aa).

The 115-residue stretch at 2 to 116 (RILLIEDDNL…EVAARLQALI (115 aa)) folds into the Response regulatory domain. Asp-51 is modified (4-aspartylphosphate). A DNA-binding region (ompR/PhoB-type) is located at residues 124–218 (HSVIEQAGVK…VHGVGYALGQ (95 aa)).

Phosphorylated by QseC.

It localises to the cytoplasm. Its function is as follows. Member of a two-component regulatory system QseB/QseC. The chain is Transcriptional regulatory protein QseB (qseB) from Haemophilus influenzae (strain ATCC 51907 / DSM 11121 / KW20 / Rd).